Consider the following 257-residue polypeptide: Triosephosphate isomerase, cytosolic (257 aa).

Substrate is bound by residues asparagine 10 and lysine 12. The active-site Electrophile is histidine 96. Catalysis depends on glutamate 167, which acts as the Proton acceptor.

Belongs to the triosephosphate isomerase family. Homodimer. Higher levels found in leaves than in roots.

The protein resides in the cytoplasm. It carries out the reaction D-glyceraldehyde 3-phosphate = dihydroxyacetone phosphate. The protein operates within carbohydrate biosynthesis; gluconeogenesis. It functions in the pathway carbohydrate degradation; glycolysis; D-glyceraldehyde 3-phosphate from glycerone phosphate: step 1/1. This chain is Triosephosphate isomerase, cytosolic (TPI), found in Stellaria longipes (Longstalk starwort).